A 270-amino-acid chain; its full sequence is Nuclease P1 (270 aa).

The a divalent metal cation site is built by Trp-1, His-6, His-15, Asp-45, and His-60. Trp-1–His-6 lines the substrate pocket. Residues Asp-45 to Ser-51, His-60 to Asp-63, and Asn-73 to Arg-78 contribute to the substrate site. 2 disulfide bridges follow: Cys-72–Cys-217 and Cys-80–Cys-85. Asn-92 carries N-linked (GlcNAc...) asparagine glycosylation. A divalent metal cation-binding residues include His-116, Asp-120, and His-126. The segment at His-116–His-164 is substrate binding. An N-linked (GlcNAc...) asparagine glycan is attached at Asn-138. The a divalent metal cation site is built by His-149 and Asp-153. Residues Asn-184 and Asn-197 are each glycosylated (N-linked (GlcNAc...) asparagine).

The protein belongs to the nuclease type I family. Zn(2+) is required as a cofactor.

The protein localises to the secreted. It catalyses the reaction Endonucleolytic cleavage to 5'-phosphomononucleotide and 5'-phosphooligonucleotide end-products.. Hydrolyzes only single-stranded DNA and RNA without apparent specificity for bases. This is Nuclease P1 from Penicillium citrinum.